A 560-amino-acid polypeptide reads, in one-letter code: Membrane protein insertase YidC (560 aa).

A helical transmembrane segment spans residues 1–21 (MDIKRTILIAALAVVSYVMVL). Residues 42–66 (VAPGLPDGVPAGNNGASADVPSANA) are disordered. 5 consecutive transmembrane segments (helical) span residues 341–361 (LELTVDYGFLWFIAQPIFWLL), 367–387 (LLGNWGWSIIVLTMLIKGLFF), 437–457 (LGGCLPILVQMPVFLALYWVL), 468–488 (WILWITDLSIKDPFFILPIIM), and 515–535 (PIIFTFFFLWFPAGLVLYWVV).

Belongs to the OXA1/ALB3/YidC family. Type 1 subfamily. As to quaternary structure, interacts with the Sec translocase complex via SecD. Specifically interacts with transmembrane segments of nascent integral membrane proteins during membrane integration.

The protein resides in the cell inner membrane. Its function is as follows. Required for the insertion and/or proper folding and/or complex formation of integral membrane proteins into the membrane. Involved in integration of membrane proteins that insert both dependently and independently of the Sec translocase complex, as well as at least some lipoproteins. Aids folding of multispanning membrane proteins. In Pseudomonas putida (strain ATCC 47054 / DSM 6125 / CFBP 8728 / NCIMB 11950 / KT2440), this protein is Membrane protein insertase YidC.